We begin with the raw amino-acid sequence, 366 residues long: Histidinol-phosphate aminotransferase 2 (366 aa).

Lys-226 is modified (N6-(pyridoxal phosphate)lysine).

The protein belongs to the class-II pyridoxal-phosphate-dependent aminotransferase family. Histidinol-phosphate aminotransferase subfamily. In terms of assembly, homodimer. The cofactor is pyridoxal 5'-phosphate.

It catalyses the reaction L-histidinol phosphate + 2-oxoglutarate = 3-(imidazol-4-yl)-2-oxopropyl phosphate + L-glutamate. It participates in amino-acid biosynthesis; L-histidine biosynthesis; L-histidine from 5-phospho-alpha-D-ribose 1-diphosphate: step 7/9. The polypeptide is Histidinol-phosphate aminotransferase 2 (hisC2) (Haemophilus influenzae (strain ATCC 51907 / DSM 11121 / KW20 / Rd)).